Consider the following 111-residue polypeptide: MAGKQAVSASGKWLDGIRKWYYNAAGFNKLGLMRDDTIYEDEDVKEAIRRLPENLYNDRMFRIKRALDLNLKHQILPKEQWTKYEEENFYLEPYLKEVIRERKEREEWAKK.

At Ala-2 the chain carries N-acetylalanine. The residue at position 12 (Lys-12) is an N6-acetyllysine; alternate. Lys-12 bears the N6-succinyllysine; alternate mark. Position 19 is an N6-acetyllysine (Lys-19). Lys-78 carries the post-translational modification N6-acetyllysine; alternate. Residue Lys-78 is modified to N6-succinyllysine; alternate. N6-acetyllysine occurs at positions 83 and 96.

Belongs to the UQCRB/QCR7 family. In terms of assembly, component of the ubiquinol-cytochrome c oxidoreductase (cytochrome b-c1 complex, complex III, CIII), a multisubunit enzyme composed of 11 subunits. The complex is composed of 3 respiratory subunits cytochrome b, cytochrome c1 and Rieske protein UQCRFS1, 2 core protein subunits UQCRC1/QCR1 and UQCRC2/QCR2, and 6 low-molecular weight protein subunits UQCRH/QCR6, UQCRB/QCR7, UQCRQ/QCR8, UQCR10/QCR9, UQCR11/QCR10 and subunit 9, the cleavage product of Rieske protein UQCRFS1. The complex exists as an obligatory dimer and forms supercomplexes (SCs) in the inner mitochondrial membrane with NADH-ubiquinone oxidoreductase (complex I, CI) and cytochrome c oxidase (complex IV, CIV), resulting in different assemblies (supercomplex SCI(1)III(2)IV(1) and megacomplex MCI(2)III(2)IV(2)).

The protein resides in the mitochondrion inner membrane. In terms of biological role, component of the ubiquinol-cytochrome c oxidoreductase, a multisubunit transmembrane complex that is part of the mitochondrial electron transport chain which drives oxidative phosphorylation. The respiratory chain contains 3 multisubunit complexes succinate dehydrogenase (complex II, CII), ubiquinol-cytochrome c oxidoreductase (cytochrome b-c1 complex, complex III, CIII) and cytochrome c oxidase (complex IV, CIV), that cooperate to transfer electrons derived from NADH and succinate to molecular oxygen, creating an electrochemical gradient over the inner membrane that drives transmembrane transport and the ATP synthase. The cytochrome b-c1 complex catalyzes electron transfer from ubiquinol to cytochrome c, linking this redox reaction to translocation of protons across the mitochondrial inner membrane, with protons being carried across the membrane as hydrogens on the quinol. In the process called Q cycle, 2 protons are consumed from the matrix, 4 protons are released into the intermembrane space and 2 electrons are passed to cytochrome c. The polypeptide is Cytochrome b-c1 complex subunit 7 (UQCRB) (Homo sapiens (Human)).